Consider the following 513-residue polypeptide: Maturase K (513 aa).

Belongs to the intron maturase 2 family. MatK subfamily.

The protein resides in the plastid. It is found in the chloroplast. In terms of biological role, usually encoded in the trnK tRNA gene intron. Probably assists in splicing its own and other chloroplast group II introns. The protein is Maturase K of Molinia caerulea (Purple moor-grass).